The following is a 254-amino-acid chain: Low affinity immunoglobulin gamma Fc region receptor III-A (254 aa).

Positions 1–20 (MWQLLLPTALLLLVSAGMRA) are cleaved as a signal peptide. Ig-like C2-type domains lie at 24–105 (PKAV…LEVH) and 107–189 (GWLL…VNIT). Intrachain disulfides connect Cys-47/Cys-89 and Cys-128/Cys-172. The N-linked (GlcNAc...) asparagine glycan is linked to Asn-187. A helical transmembrane segment spans residues 207-229 (YQVSFCLVMVLLFAVDTGLYFSV). A disordered region spans residues 234-254 (PSSTSDWKDHKFKWSKDPQDK). A compositionally biased stretch (basic and acidic residues) spans 239–254 (DWKDHKFKWSKDPQDK).

In terms of assembly, forms a heterooligomeric complex with ITAM-containing signaling subunits, either a homodimer of CD247, a homodimer of FCER1G or a heterodimer of CD247 and FCER1G, to form a functional receptor complex. Interacts (via transmembrane domain) with signaling subunits; this interaction is a prerequisite for receptor complex expression on the cell surface and intracellular signal transduction. Binds the Fc region of antigen-complexed IgG with a preference for IgG1 and IgG3 isotypes. Interacts with CD2; this interaction is involved in NK cell activation and cytotoxicity. Interacts with S100A4; this interaction inhibits PKC-dependent phosphorylation of FCGR3A. Post-translationally, glycosylated. Glycosylation plays an inhibitory role in the interaction with IgG1 and IgG2. In terms of processing, undergoes rapid ectodomain shedding upon NK cell stimulation. The soluble form is produced by a proteolytic cleavage mediated by ADAM17. Repeated stimulation causes receptor shedding, a mechanism that allows for increased NK cell motility and detachment from opsonized target cells while avoiding activation-induced NK cell apoptosis. Lymphocytes and monocytes.

It localises to the cell membrane. Its subcellular location is the secreted. Functionally, receptor for the invariable Fc fragment of immunoglobulin gamma (IgG). Optimally activated upon binding of clustered antigen-IgG complexes displayed on cell surfaces, triggers lysis of antibody-coated cells, a process known as antibody-dependent cellular cytotoxicity (ADCC). Does not bind free monomeric IgG, thus avoiding inappropriate effector cell activation in the absence of antigenic trigger. Mediates IgG effector functions on natural killer (NK) cells. Binds antigen-IgG complexes generated upon infection and triggers NK cell-dependent cytokine production and degranulation to limit viral load and propagation. Involved in the generation of memory-like adaptive NK cells capable to produce high amounts of IFNG and to efficiently eliminate virus-infected cells via ADCC. Regulates NK cell survival and proliferation, in particular by preventing NK cell progenitor apoptosis. Fc-binding subunit that associates with CD247 and/or FCER1G adapters to form functional signaling complexes. Following the engagement of antigen-IgG complexes, triggers phosphorylation of immunoreceptor tyrosine-based activation motif (ITAM)-containing adapters with subsequent activation of phosphatidylinositol 3-kinase signaling and sustained elevation of intracellular calcium that ultimately drive NK cell activation. The ITAM-dependent signaling coupled to receptor phosphorylation by PKC mediates robust intracellular calcium flux that leads to production of pro-inflammatory cytokines, whereas in the absence of receptor phosphorylation it mainly activates phosphatidylinositol 3-kinase signaling leading to cell degranulation. Costimulates NK cells and trigger lysis of target cells independently of IgG binding. Mediates the antitumor activities of therapeutic antibodies. Upon ligation on monocytes triggers TNFA-dependent ADCC of IgG-coated tumor cells. Mediates enhanced ADCC in response to afucosylated IgGs. The sequence is that of Low affinity immunoglobulin gamma Fc region receptor III-A (FCGR3A) from Papio anubis (Olive baboon).